The following is a 43-amino-acid chain: Large ribosomal subunit protein bL32 (43 aa).

Belongs to the bacterial ribosomal protein bL32 family.

The sequence is that of Large ribosomal subunit protein bL32 (rpmF) from Carsonella ruddii (strain PV).